Reading from the N-terminus, the 644-residue chain is Exoribonuclease 2 (644 aa).

The RNB domain occupies Arg189–Lys516. An S1 motif domain is found at Asn561 to Ala643.

Belongs to the RNR ribonuclease family. RNase II subfamily.

It is found in the cytoplasm. It catalyses the reaction Exonucleolytic cleavage in the 3'- to 5'-direction to yield nucleoside 5'-phosphates.. Functionally, involved in mRNA degradation. Hydrolyzes single-stranded polyribonucleotides processively in the 3' to 5' direction. The polypeptide is Exoribonuclease 2 (Salmonella gallinarum (strain 287/91 / NCTC 13346)).